The sequence spans 156 residues: 6,7-dimethyl-8-ribityllumazine synthase (156 aa).

5-amino-6-(D-ribitylamino)uracil contacts are provided by residues F23, 57-59 (AFE), and 81-83 (AVI). 86 to 87 (AT) lines the (2S)-2-hydroxy-3-oxobutyl phosphate pocket. Catalysis depends on H89, which acts as the Proton donor. N114 provides a ligand contact to 5-amino-6-(D-ribitylamino)uracil. R128 lines the (2S)-2-hydroxy-3-oxobutyl phosphate pocket.

Belongs to the DMRL synthase family.

It carries out the reaction (2S)-2-hydroxy-3-oxobutyl phosphate + 5-amino-6-(D-ribitylamino)uracil = 6,7-dimethyl-8-(1-D-ribityl)lumazine + phosphate + 2 H2O + H(+). It functions in the pathway cofactor biosynthesis; riboflavin biosynthesis; riboflavin from 2-hydroxy-3-oxobutyl phosphate and 5-amino-6-(D-ribitylamino)uracil: step 1/2. Functionally, catalyzes the formation of 6,7-dimethyl-8-ribityllumazine by condensation of 5-amino-6-(D-ribitylamino)uracil with 3,4-dihydroxy-2-butanone 4-phosphate. This is the penultimate step in the biosynthesis of riboflavin. The sequence is that of 6,7-dimethyl-8-ribityllumazine synthase from Aliarcobacter butzleri (strain RM4018) (Arcobacter butzleri).